The following is a 130-amino-acid chain: Small ribosomal subunit protein uS11 (130 aa).

The protein belongs to the universal ribosomal protein uS11 family. Part of the 30S ribosomal subunit. Interacts with proteins S7 and S18. Binds to IF-3.

In terms of biological role, located on the platform of the 30S subunit, it bridges several disparate RNA helices of the 16S rRNA. Forms part of the Shine-Dalgarno cleft in the 70S ribosome. This Ruegeria pomeroyi (strain ATCC 700808 / DSM 15171 / DSS-3) (Silicibacter pomeroyi) protein is Small ribosomal subunit protein uS11.